The following is a 369-amino-acid chain: Ferredoxin--NADP reductase, chloroplastic (369 aa).

Residues 1–55 constitute a chloroplast transit peptide; that stretch reads MTTAVTAAVSFPSTKTTSLSARSSSVISPDKISYKKVPLYYRNVSATGKMGPIRA. The 123-residue stretch at 90–212 folds into the FAD-binding FR-type domain; that stretch reads KTPYVGRCLL…TGPVGKEMLM (123 aa). FAD-binding positions include 148–151, 169–171, Y175, 186–188, and T227; these read RLYS, CVK, and VCS. NADP(+)-binding residues include S151 and K171. Residues T227, 259–260, 289–290, 299–301, 328–329, and E367 each bind NADP(+); these read VP, SR, KMY, and GL.

This sequence belongs to the ferredoxin--NADP reductase type 1 family. FAD serves as cofactor.

Its subcellular location is the plastid. It localises to the chloroplast stroma. It is found in the chloroplast thylakoid membrane. The catalysed reaction is 2 reduced [2Fe-2S]-[ferredoxin] + NADP(+) + H(+) = 2 oxidized [2Fe-2S]-[ferredoxin] + NADPH. Its pathway is energy metabolism; photosynthesis. May play a key role in regulating the relative amounts of cyclic and non-cyclic electron flow to meet the demands of the plant for ATP and reducing power. This is Ferredoxin--NADP reductase, chloroplastic (PETH) from Spinacia oleracea (Spinach).